The chain runs to 432 residues: C4-dicarboxylate transport protein (432 aa).

8 helical membrane passes run 8–28, 44–64, 78–98, 148–168, 188–208, 222–242, 307–327, and 355–375; these read ILYVQVLFAICVGILLGHYWP, LIKMIIGPIIFCTVVTGIAGM, LLYFEVVSTFALLIGLGAAHL, GDILQILLVSLFFGAALAVLG, IVHVITKVAPIGAFGAMAFTI, LIGTFYFTAIIFVLVVLGTIA, IYMTMAVIFIAQATGIELTLM, and AATLAVVPTIPVAGMVLILGI.

It belongs to the dicarboxylate/amino acid:cation symporter (DAACS) (TC 2.A.23) family.

The protein localises to the cell inner membrane. In terms of biological role, responsible for the transport of dicarboxylates such as succinate, fumarate, and malate from the periplasm across the membrane. In Cupriavidus necator (strain ATCC 17699 / DSM 428 / KCTC 22496 / NCIMB 10442 / H16 / Stanier 337) (Ralstonia eutropha), this protein is C4-dicarboxylate transport protein.